Consider the following 651-residue polypeptide: MILRLFILLSIITVYLQLSVGIQQQFEFAITLKSKILFVDEHWNVVNTAAHEFDELSALTFDESEERIYFNDGQHQNSSIFSLRKVGKSNHLAEQTIQRYGNESVGGIAYDPLNRTIYWSDLLQKKIFYASIDTVATEMPKILVDLSEENGTPYGVAIDICGRKLYWTNSNINHPTVERIDLNGTGRLAIIDKNIDSPRGIVVDQGAKRIFWIDDLKGIFFAVMSAQLDGSDVKLVLKDKNHEPQNLAVTRNAIYWTDRTTKSVWSHLKEPEIATTTTTTTTSTTQIPTVEGEEGTGAMDDNDIWPVGDFETTPKKSPLERKINLTEEARGIVARTGFYQLQKDSQCSKVIQLVKQRLDESQQNNRVLNVVDEQLDELQREHCLGGGTYYPQQKFCVCVPGYKGTRCETNECHNFCVHGTCQISEMGYPKCYCQPGYSGERCEVKKCLNFCQNGGDCQLDELTGEASCQCPSNFGGLRCEHNSTEICGLFCRLLKHDSNTSVPFGCHDICEQLAKDSSDLIAIPEYKHLDVCLAPNAWTGSVLMPLMISLILILLLLTIFIHGLRRLYKPKRPHIKKTFVVRKQARTNSSSDTPLTNRPLATEQCEITIENCCNMNICETPCFDPKLVEFAKSNCKDDKKILIHNMEDDLY.

The N-terminal stretch at 1 to 21 is a signal peptide; that stretch reads MILRLFILLSIITVYLQLSVG. Over 22 to 540 the chain is Extracellular; the sequence is IQQQFEFAIT…VCLAPNAWTG (519 aa). 3 N-linked (GlcNAc...) asparagine glycosylation sites follow: asparagine 77, asparagine 102, and asparagine 114. LDL-receptor class B repeat units follow at residues 115–162, 163–207, and 208–253; these read RTIY…DICG, RKLY…DQGA, and KRIF…TRNA. N-linked (GlcNAc...) asparagine glycosylation is present at asparagine 183. The segment at 290–311 is disordered; it reads VEGEEGTGAMDDNDIWPVGDFE. Residue asparagine 324 is glycosylated (N-linked (GlcNAc...) asparagine). 3 EGF-like domains span residues 374–408, 409–440, and 443–480; these read QLDE…TRCE, TNEC…YSGE, and EVKK…LRCE. Disulfide bonds link cysteine 383–cysteine 396, cysteine 398–cysteine 407, cysteine 412–cysteine 421, cysteine 416–cysteine 431, cysteine 447–cysteine 457, cysteine 451–cysteine 468, and cysteine 470–cysteine 479. N-linked (GlcNAc...) asparagine glycans are attached at residues asparagine 482 and asparagine 499. Residues 541–561 traverse the membrane as a helical segment; sequence SVLMPLMISLILILLLLTIFI. The Cytoplasmic segment spans residues 562-651; it reads HGLRRLYKPK…LIHNMEDDLY (90 aa).

It belongs to the cueball family.

The protein resides in the cell membrane. Functionally, has a role in spermatogenesis and oogenesis. This Drosophila willistoni (Fruit fly) protein is Protein cueball.